Here is a 533-residue protein sequence, read N- to C-terminus: Beta-xylosidase (533 aa).

The active-site Proton acceptor is the D14. Catalysis depends on E186, which acts as the Proton donor.

Belongs to the glycosyl hydrolase 43 family. Homodimer.

The protein localises to the cell membrane. It carries out the reaction Hydrolysis of (1-&gt;4)-beta-D-xylans, to remove successive D-xylose residues from the non-reducing termini.. In Bacillus subtilis (strain 168), this protein is Beta-xylosidase (xynB).